The following is a 222-amino-acid chain: Cytolethal distending toxin subunit A (222 aa).

The N-terminal stretch at 1–15 (MKKFLPGLLLMGLVA) is a signal peptide. Cysteine 16 carries N-palmitoyl cysteine lipidation. Residue cysteine 16 is the site of S-diacylglycerol cysteine attachment. Residues 22–44 (MSDYSQPESQSDLAPKSSTTQFQ) form a disordered region. A mediates binding to target cells region spans residues 90-101 (WALAKRNWLWAY). The Ricin B-type lectin domain maps to 122–211 (HREYFRFVNQ…EPLRDQTWYL (90 aa)).

Heterotrimer of 3 subunits, CdtA, CdtB and CdtC. May form higher oligomers.

The protein localises to the cell outer membrane. Functionally, CDTs are cytotoxins which induce host cell distension, growth arrest in G2/M phase, nucleus swelling, and chromatin fragmentation in HeLa cells. In Aggregatibacter actinomycetemcomitans (Actinobacillus actinomycetemcomitans), this protein is Cytolethal distending toxin subunit A (cdtA).